Consider the following 232-residue polypeptide: Translation initiation factor IF-3 (232 aa).

Disordered stretches follow at residues 1–21 (MAIQHRDPRGGGGSRDARTNR) and 184–232 (LQSQ…AAQR). Residues 193-208 (AAAAAAPAAAPAAGAP) show a composition bias toward low complexity. The span at 209 to 222 (APTPAPAPAAPAPA) shows a compositional bias: pro residues. The span at 223-232 (PAAADPAAQR) shows a compositional bias: low complexity.

The protein belongs to the IF-3 family. In terms of assembly, monomer.

The protein localises to the cytoplasm. Its function is as follows. IF-3 binds to the 30S ribosomal subunit and shifts the equilibrium between 70S ribosomes and their 50S and 30S subunits in favor of the free subunits, thus enhancing the availability of 30S subunits on which protein synthesis initiation begins. This is Translation initiation factor IF-3 from Anaeromyxobacter sp. (strain K).